We begin with the raw amino-acid sequence, 204 residues long: Proteasome subunit beta 2 (204 aa).

Residues 1–6 (MEVLPG) constitute a propeptide, removed in mature form; by autocatalysis. Catalysis depends on Thr7, which acts as the Nucleophile.

The protein belongs to the peptidase T1B family. The 20S proteasome core is composed of 14 alpha and 14 beta subunits that assemble into four stacked heptameric rings, resulting in a barrel-shaped structure. The two inner rings, each composed of seven catalytic beta subunits, are sandwiched by two outer rings, each composed of seven alpha subunits. The catalytic chamber with the active sites is on the inside of the barrel. Has a gated structure, the ends of the cylinder being occluded by the N-termini of the alpha-subunits. Is capped at one or both ends by the proteasome regulatory ATPase, PAN.

The protein resides in the cytoplasm. The catalysed reaction is Cleavage of peptide bonds with very broad specificity.. Its activity is regulated as follows. The formation of the proteasomal ATPase PAN-20S proteasome complex, via the docking of the C-termini of PAN into the intersubunit pockets in the alpha-rings, triggers opening of the gate for substrate entry. Interconversion between the open-gate and close-gate conformations leads to a dynamic regulation of the 20S proteasome proteolysis activity. Component of the proteasome core, a large protease complex with broad specificity involved in protein degradation. The chain is Proteasome subunit beta 2 from Thermofilum pendens (strain DSM 2475 / Hrk 5).